The chain runs to 201 residues: Orotate phosphoribosyltransferase (201 aa).

113–121 (EDIITTGKS) is a binding site for 5-phospho-alpha-D-ribose 1-diphosphate. Residues T117 and R145 each contribute to the orotate site.

Belongs to the purine/pyrimidine phosphoribosyltransferase family. PyrE subfamily. As to quaternary structure, homodimer. Mg(2+) is required as a cofactor.

It carries out the reaction orotidine 5'-phosphate + diphosphate = orotate + 5-phospho-alpha-D-ribose 1-diphosphate. The protein operates within pyrimidine metabolism; UMP biosynthesis via de novo pathway; UMP from orotate: step 1/2. Its function is as follows. Catalyzes the transfer of a ribosyl phosphate group from 5-phosphoribose 1-diphosphate to orotate, leading to the formation of orotidine monophosphate (OMP). The chain is Orotate phosphoribosyltransferase from Helicobacter pylori (strain G27).